Reading from the N-terminus, the 447-residue chain is uncharacterized protein (447 aa).

Positions 39-76 (PQAAPYTRNNGMGECRRGHRQGHRAEVHDNRPADKVGQ) are disordered. A compositionally biased stretch (basic and acidic residues) spans 61 to 72 (HRAEVHDNRPAD).

This sequence belongs to the 3-oxoacid CoA-transferase subunit A family.

This is an uncharacterized protein from Archaeoglobus fulgidus (strain ATCC 49558 / DSM 4304 / JCM 9628 / NBRC 100126 / VC-16).